The chain runs to 250 residues: 5-oxoprolinase subunit A (250 aa).

The protein belongs to the LamB/PxpA family. As to quaternary structure, forms a complex composed of PxpA, PxpB and PxpC.

The enzyme catalyses 5-oxo-L-proline + ATP + 2 H2O = L-glutamate + ADP + phosphate + H(+). Catalyzes the cleavage of 5-oxoproline to form L-glutamate coupled to the hydrolysis of ATP to ADP and inorganic phosphate. In Klebsiella pneumoniae (strain 342), this protein is 5-oxoprolinase subunit A.